The following is a 282-amino-acid chain: Biotin synthase (282 aa).

In terms of domain architecture, Radical SAM core spans 1 to 230 (MSDNKIYLCA…NQMLMIAGGR (230 aa)). Cysteine 19, cysteine 23, and cysteine 26 together coordinate [4Fe-4S] cluster. Positions 63, 98, and 156 each coordinate [2Fe-2S] cluster.

Belongs to the radical SAM superfamily. Biotin synthase family. In terms of assembly, homodimer. Requires [4Fe-4S] cluster as cofactor. [2Fe-2S] cluster is required as a cofactor.

It carries out the reaction (4R,5S)-dethiobiotin + (sulfur carrier)-SH + 2 reduced [2Fe-2S]-[ferredoxin] + 2 S-adenosyl-L-methionine = (sulfur carrier)-H + biotin + 2 5'-deoxyadenosine + 2 L-methionine + 2 oxidized [2Fe-2S]-[ferredoxin]. The protein operates within cofactor biosynthesis; biotin biosynthesis; biotin from 7,8-diaminononanoate: step 2/2. Functionally, catalyzes the conversion of dethiobiotin (DTB) to biotin by the insertion of a sulfur atom into dethiobiotin via a radical-based mechanism. The chain is Biotin synthase from Aliarcobacter butzleri (strain RM4018) (Arcobacter butzleri).